A 311-amino-acid polypeptide reads, in one-letter code: Probable cell division protein WhiA (311 aa).

Residues 274–307 (SLKELGSLLTPPLTKSGVNHRFRKLELIAEKIRN) constitute a DNA-binding region (H-T-H motif).

Belongs to the WhiA family.

Functionally, involved in cell division and chromosome segregation. This chain is Probable cell division protein WhiA, found in Carboxydothermus hydrogenoformans (strain ATCC BAA-161 / DSM 6008 / Z-2901).